Consider the following 1135-residue polypeptide: Potassium channel subfamily T member 2 (1135 aa).

The Cytoplasmic segment spans residues 1 to 63 (MVDLESEVPP…KNQRSSLRIR (63 aa)). Residues 64-84 (LFNFSLKLLSCLLYIIRVLLE) form a helical membrane-spanning segment. Over 85 to 101 (KPSQGSEWSHIFWVNRS) the chain is Extracellular. A helical membrane pass occupies residues 102-122 (LPLWGLQVSVALISLFETILL). The Cytoplasmic portion of the chain corresponds to 123-137 (GYLSYKGNIWEQILR). Residues 138–158 (IPFILEIINAVPFIISIFWPT) traverse the membrane as a helical segment. Over 159-164 (LRNLFV) the chain is Extracellular. Residues 165–185 (PVFLNCWLAKHALENMINDLH) traverse the membrane as a helical segment. The Cytoplasmic segment spans residues 186–198 (RAIQRTQSAMFNQ). A helical transmembrane segment spans residues 199–219 (VLILISTLLCLIFTCICGIQH). Topologically, residues 220–228 (LERIGKKLN) are extracellular. Positions 229–249 (LFDSLYFCIVTFSTVGFGDVT) form an intramembrane region, pore-forming. At 250-256 (PETWSSK) the chain is on the extracellular side. A helical membrane pass occupies residues 257-277 (LFVVAMICVALVVLPIQFEQL). Residues 278–1135 (AYLWMERQKS…VQDSREETQL (858 aa)) lie on the Cytoplasmic side of the membrane. RCK N-terminal domains lie at 299–435 (EKHV…DHVV) and 718–858 (NKLI…CYSL). Disordered regions lie at residues 982 to 1036 (DTKD…AEKI) and 1111 to 1135 (PNSE…ETQL). Positions 1010–1030 (LRRKSMQWARRLSRKGPKHSG) are enriched in basic residues. Polar residues predominate over residues 1111 to 1122 (PNSEPSRKNSIC).

The protein belongs to the potassium channel family. Calcium-activated (TC 1.A.1.3) subfamily. KCa4.2/KCNT2 sub-subfamily. As to quaternary structure, homotetramer. Forms heteromeric channels with KCNT1. These heterodimer channels differ from the homomers in their unitary conductance, kinetic behavior, subcellular localization, and response to activation of protein kinase C. Phosphorylated by protein kinase C. Phosphorylation of the C-terminal domain inhibits channel activity. In terms of tissue distribution, within the dorsal root ganglia (DRGs), exclusively expressed in small-sized and medium-sized calcitonin gene-related peptide (CGRP)-containing DRG neurons.

It localises to the cell membrane. The enzyme catalyses K(+)(in) = K(+)(out). With respect to regulation, are normally in a closed state unless activated by an increase in intracellular Na(+) and Cl(-). Inhibited upon stimulation of G-protein coupled receptors, such as CHRM1 and GRM1. There is conflicting data about the effect of ATP on KNCT2 channels activity. Intracellular ATP was initially report to inhibit the channel activity. However, others studies conclude that KNCT2 channels are not inhibited by intracellular ATP. Its function is as follows. Sodium-activated and chloride-activated potassium channel. Produces rapidly activating outward rectifier K(+) currents. Contributes to regulate neuronal excitability. This is Potassium channel subfamily T member 2 (Kcnt2) from Mus musculus (Mouse).